We begin with the raw amino-acid sequence, 258 residues long: Imidazole glycerol phosphate synthase subunit HisF (258 aa).

Active-site residues include D11 and D130.

It belongs to the HisA/HisF family. Heterodimer of HisH and HisF.

The protein localises to the cytoplasm. The enzyme catalyses 5-[(5-phospho-1-deoxy-D-ribulos-1-ylimino)methylamino]-1-(5-phospho-beta-D-ribosyl)imidazole-4-carboxamide + L-glutamine = D-erythro-1-(imidazol-4-yl)glycerol 3-phosphate + 5-amino-1-(5-phospho-beta-D-ribosyl)imidazole-4-carboxamide + L-glutamate + H(+). It participates in amino-acid biosynthesis; L-histidine biosynthesis; L-histidine from 5-phospho-alpha-D-ribose 1-diphosphate: step 5/9. In terms of biological role, IGPS catalyzes the conversion of PRFAR and glutamine to IGP, AICAR and glutamate. The HisF subunit catalyzes the cyclization activity that produces IGP and AICAR from PRFAR using the ammonia provided by the HisH subunit. The sequence is that of Imidazole glycerol phosphate synthase subunit HisF from Escherichia coli O127:H6 (strain E2348/69 / EPEC).